The sequence spans 225 residues: pH-response regulator palI/RIM9 homolog 2 (225 aa).

Residues M1–K4 lie on the Cytoplasmic side of the membrane. Residues I5–V25 form a helical membrane-spanning segment. Topologically, residues P26–N87 are extracellular. Residues L88–L108 traverse the membrane as a helical segment. Over T109–M120 the chain is Cytoplasmic. A helical membrane pass occupies residues L121–I141. Topologically, residues D142 to C153 are extracellular. The helical transmembrane segment at T154–M174 threads the bilayer. Topologically, residues R175–M225 are cytoplasmic.

It belongs to the palI/RIM9 family.

It localises to the cell membrane. Functionally, required for the proteolytic cleavage of the transcription factor RIM101 in response to alkaline ambient pH. The chain is pH-response regulator palI/RIM9 homolog 2 from Kluyveromyces lactis (strain ATCC 8585 / CBS 2359 / DSM 70799 / NBRC 1267 / NRRL Y-1140 / WM37) (Yeast).